The primary structure comprises 192 residues: Erythropoietin (192 aa).

Positions 1–26 (MGVRECPALLLLLSLLLPPLGLPALG) are cleaved as a signal peptide. Cystine bridges form between Cys-33/Cys-187 and Cys-55/Cys-59. Residue Asn-50 is glycosylated (N-linked (GlcNAc...) asparagine). N-linked (GlcNAc...) asparagine glycosylation is found at Asn-64 and Asn-109.

The protein belongs to the EPO/TPO family.

Its subcellular location is the secreted. Its function is as follows. Hormone involved in the regulation of erythrocyte proliferation and differentiation and the maintenance of a physiological level of circulating erythrocyte mass. Binds to EPOR leading to EPOR dimerization and JAK2 activation thereby activating specific downstream effectors, including STAT1 and STAT3. This chain is Erythropoietin (EPO), found in Equus caballus (Horse).